The primary structure comprises 376 residues: Alcohol dehydrogenase class-3 (376 aa).

The Zn(2+) site is built by cysteine 47, histidine 69, cysteine 99, cysteine 102, cysteine 105, cysteine 113, and cysteine 176.

The protein belongs to the zinc-containing alcohol dehydrogenase family. Class-III subfamily. Homodimer. Requires Zn(2+) as cofactor. As to expression, expressed in the skeletal muscle, heart, gill filaments and liver, with highest levels in the kidney.

It localises to the cytoplasm. It catalyses the reaction a primary alcohol + NAD(+) = an aldehyde + NADH + H(+). The catalysed reaction is a secondary alcohol + NAD(+) = a ketone + NADH + H(+). The enzyme catalyses S-(hydroxymethyl)glutathione + NADP(+) = S-formylglutathione + NADPH + H(+). It carries out the reaction S-(hydroxymethyl)glutathione + NAD(+) = S-formylglutathione + NADH + H(+). It catalyses the reaction S-nitrosoglutathione + NADH + H(+) = S-(hydroxysulfenamide)glutathione + NAD(+). Functionally, class-III ADH is remarkably ineffective in oxidizing ethanol, but it readily catalyzes the oxidation of long-chain primary alcohols and the oxidation of S-(hydroxymethyl) glutathione. Also acts as a S-nitroso-glutathione reductase by catalyzing the NADH-dependent reduction of S-nitrosoglutathione, thereby regulating protein S-nitrosylation. This is Alcohol dehydrogenase class-3 from Sparus aurata (Gilthead sea bream).